The sequence spans 355 residues: Methionine import ATP-binding protein MetN 1 (355 aa).

In terms of domain architecture, ABC transporter spans 6 to 245 (IDLKDIAVTF…PKAPLTVDFV (240 aa)). An ATP-binding site is contributed by 42-49 (GYSGAGKS).

This sequence belongs to the ABC transporter superfamily. Methionine importer (TC 3.A.1.24) family. The complex is composed of two ATP-binding proteins (MetN), two transmembrane proteins (MetI) and a solute-binding protein (MetQ).

It localises to the cell membrane. The enzyme catalyses L-methionine(out) + ATP + H2O = L-methionine(in) + ADP + phosphate + H(+). The catalysed reaction is D-methionine(out) + ATP + H2O = D-methionine(in) + ADP + phosphate + H(+). Part of the ABC transporter complex MetNIQ involved in methionine import. Responsible for energy coupling to the transport system. This Lactiplantibacillus plantarum (strain ATCC BAA-793 / NCIMB 8826 / WCFS1) (Lactobacillus plantarum) protein is Methionine import ATP-binding protein MetN 1.